Here is a 542-residue protein sequence, read N- to C-terminus: Anaerobic glycerol-3-phosphate dehydrogenase subunit A (542 aa).

10–38 contributes to the FAD binding site; that stretch reads DVIIIGGGATGAGIARDCALRGLRVILVE.

It belongs to the FAD-dependent glycerol-3-phosphate dehydrogenase family. As to quaternary structure, composed of a catalytic GlpA/B dimer and of membrane bound GlpC. The cofactor is FAD. It depends on FMN as a cofactor.

It localises to the cell inner membrane. The enzyme catalyses a quinone + sn-glycerol 3-phosphate = dihydroxyacetone phosphate + a quinol. It participates in polyol metabolism; glycerol degradation via glycerol kinase pathway; glycerone phosphate from sn-glycerol 3-phosphate (anaerobic route): step 1/1. Conversion of glycerol 3-phosphate to dihydroxyacetone. Uses fumarate or nitrate as electron acceptor. This is Anaerobic glycerol-3-phosphate dehydrogenase subunit A (glpA) from Escherichia coli O157:H7.